Consider the following 189-residue polypeptide: UPF0301 protein RMA_0049 (189 aa).

This sequence belongs to the UPF0301 (AlgH) family.

The protein is UPF0301 protein RMA_0049 of Rickettsia massiliae (strain Mtu5).